Here is a 154-residue protein sequence, read N- to C-terminus: UPF0178 protein YaiI (154 aa).

It belongs to the UPF0178 family.

The polypeptide is UPF0178 protein YaiI (Escherichia coli (strain ATCC 8739 / DSM 1576 / NBRC 3972 / NCIMB 8545 / WDCM 00012 / Crooks)).